The sequence spans 267 residues: Hydroxyethylthiazole kinase (267 aa).

Substrate is bound at residue Met-42. 2 residues coordinate ATP: Cys-118 and Thr-162. Position 189 (Gly-189) interacts with substrate.

Belongs to the Thz kinase family. The cofactor is Mg(2+).

It carries out the reaction 5-(2-hydroxyethyl)-4-methylthiazole + ATP = 4-methyl-5-(2-phosphooxyethyl)-thiazole + ADP + H(+). Its pathway is cofactor biosynthesis; thiamine diphosphate biosynthesis; 4-methyl-5-(2-phosphoethyl)-thiazole from 5-(2-hydroxyethyl)-4-methylthiazole: step 1/1. In terms of biological role, catalyzes the phosphorylation of the hydroxyl group of 4-methyl-5-beta-hydroxyethylthiazole (THZ). In Rubrobacter xylanophilus (strain DSM 9941 / JCM 11954 / NBRC 16129 / PRD-1), this protein is Hydroxyethylthiazole kinase.